The chain runs to 133 residues: Meiotically up-regulated gene 15 protein (133 aa).

Its subcellular location is the cytoplasm. The protein resides in the nucleus. Functionally, has a role in meiosis. This Schizosaccharomyces pombe (strain 972 / ATCC 24843) (Fission yeast) protein is Meiotically up-regulated gene 15 protein (mug15).